Consider the following 193-residue polypeptide: uncharacterized protein (193 aa).

Positions 1–26 (MRNVFVGALCMCGMSFVFSDSVRSAA) are cleaved as a signal peptide.

This is an uncharacterized protein from Treponema pallidum (strain Nichols).